The primary structure comprises 631 residues: Leucine aminopeptidase 2-2 (631 aa).

Residues Gln-140 to Gln-142 and Pro-265 to Glu-270 each bind substrate. His-294 provides a ligand contact to Zn(2+). Glu-295 acts as the Proton acceptor in catalysis. His-298 and Glu-317 together coordinate Zn(2+). The active-site Proton donor is the Tyr-395.

It belongs to the peptidase M1 family. The cofactor is Zn(2+).

Its subcellular location is the cytoplasm. It localises to the nucleus. It carries out the reaction an epoxide + H2O = an ethanediol. Aminopeptidase that preferentially cleaves di- and tripeptides. Also has low epoxide hydrolase activity (in vitro). Can hydrolyze the epoxide leukotriene LTA(4) but it forms preferentially 5,6-dihydroxy-7,9,11,14-eicosatetraenoic acid rather than the cytokine leukotriene B(4) as the product compared to the homologous mammalian enzyme (in vitro). The protein is Leucine aminopeptidase 2-2 of Meyerozyma guilliermondii (strain ATCC 6260 / CBS 566 / DSM 6381 / JCM 1539 / NBRC 10279 / NRRL Y-324) (Yeast).